The sequence spans 397 residues: MSDTLLNPYFGEFGGMYVPEILVPVLKQLEQAFVEAQNDPTFQAEFADLLKNYAGRPTALTLCRNLTKGTKTKLYLKREDLLHGGAHKTNQVLGQILLAKRMGKTRIIAETGAGQHGVATALACAMLDMPCRVYMGAKDVERQSPNVFRMRLMGAEVIPVQKGSCSLKDACCEAMRDWSANYETTHYLLGTAAGPHPFPTIVKEFQKMIGEETKRQILEREGRLPDAVIAAVGGGSNAIGMFADFIDESNVRLIGVEPAGKGIETGEHGAPLKHGTTGIYFGMKSPIMQDKDGQIEESYSISAGLDFPSVGPQHAYLNEIGRADYVSITDEEALNAFQELAKHEGIIPALESSHALAYALKLIKQNPEKEQLLVVNLSGRGDKDIFTVDKILNGGTN.

Lys88 carries the N6-(pyridoxal phosphate)lysine modification.

The protein belongs to the TrpB family. As to quaternary structure, tetramer of two alpha and two beta chains. It depends on pyridoxal 5'-phosphate as a cofactor.

It carries out the reaction (1S,2R)-1-C-(indol-3-yl)glycerol 3-phosphate + L-serine = D-glyceraldehyde 3-phosphate + L-tryptophan + H2O. It participates in amino-acid biosynthesis; L-tryptophan biosynthesis; L-tryptophan from chorismate: step 5/5. In terms of biological role, the beta subunit is responsible for the synthesis of L-tryptophan from indole and L-serine. The chain is Tryptophan synthase beta chain from Haemophilus influenzae (strain PittEE).